The following is a 118-amino-acid chain: uncharacterized protein (118 aa).

3 helical membrane-spanning segments follow: residues 22–44, 54–71, and 78–99; these read IIASIVGAVIIAAAISALLFSIA, LSPLVYSIVSLAVIPVLR, and PILSLLTAFSIPILFLSGVEWL.

The protein localises to the cell membrane. This is an uncharacterized protein from Archaeoglobus fulgidus (strain ATCC 49558 / DSM 4304 / JCM 9628 / NBRC 100126 / VC-16).